A 504-amino-acid polypeptide reads, in one-letter code: Lysine--tRNA ligase (504 aa).

Glu411 and Glu418 together coordinate Mg(2+).

This sequence belongs to the class-II aminoacyl-tRNA synthetase family. As to quaternary structure, homodimer. Mg(2+) is required as a cofactor.

It is found in the cytoplasm. The catalysed reaction is tRNA(Lys) + L-lysine + ATP = L-lysyl-tRNA(Lys) + AMP + diphosphate. The sequence is that of Lysine--tRNA ligase from Clostridium botulinum (strain Loch Maree / Type A3).